A 388-amino-acid chain; its full sequence is Calcium-binding and spermatid-specific protein 1 (388 aa).

Residues 1 to 20 are disordered; it reads MAEDGLPKIYSHPPAESTKT. Thr280 carries the phosphothreonine; by CK2 modification. Phosphoserine occurs at positions 312 and 344.

It localises to the cytoplasm. The protein resides in the mitochondrion inner membrane. Its subcellular location is the cell projection. The protein localises to the cilium. It is found in the flagellum. It localises to the cytoplasmic vesicle. The protein resides in the secretory vesicle. Its subcellular location is the acrosome. Functionally, calcium-binding protein. Essential for maintaining the structural integrity of the sperm flagella. The protein is Calcium-binding and spermatid-specific protein 1 (CABS1) of Bos taurus (Bovine).